Here is a 141-residue protein sequence, read N- to C-terminus: VLSPADKTNVKAAWEKVGGHAGDYGAEALERMFLSFPTTKTYFPHFDLSHGSSQVKGHGKKVGDALGNAVAHMDDLPGALSALSDLHAYKLRVDPVNFKLLSHCLLVTLASHHAADFTPAVHASLDKFLASVSTVLTSKYR.

Residues 1–141 (VLSPADKTNV…VSTVLTSKYR (141 aa)) form the Globin domain. Residue serine 3 is modified to Phosphoserine. The residue at position 7 (lysine 7) is an N6-succinyllysine. Threonine 8 bears the Phosphothreonine mark. Lysine 11 carries the post-translational modification N6-succinyllysine. Lysine 16 carries the N6-acetyllysine; alternate modification. An N6-succinyllysine; alternate modification is found at lysine 16. The residue at position 24 (tyrosine 24) is a Phosphotyrosine. Serine 35 carries the post-translational modification Phosphoserine. Lysine 40 carries the N6-succinyllysine modification. Serine 49 bears the Phosphoserine mark. Residue histidine 58 participates in O2 binding. Residue histidine 87 participates in heme b binding. Serine 102 is subject to Phosphoserine. Threonine 108 carries the post-translational modification Phosphothreonine. Phosphoserine is present on residues serine 124 and serine 131. Phosphothreonine is present on residues threonine 134 and threonine 137. A Phosphoserine modification is found at serine 138.

Belongs to the globin family. As to quaternary structure, heterotetramer of two alpha chains and two beta chains. As to expression, red blood cells.

Involved in oxygen transport from the lung to the various peripheral tissues. Its function is as follows. Hemopressin acts as an antagonist peptide of the cannabinoid receptor CNR1. Hemopressin-binding efficiently blocks cannabinoid receptor CNR1 and subsequent signaling. The protein is Hemoglobin subunit alpha (HBA) of Taphozous georgianus (Sharp-nosed tomb bat).